The chain runs to 449 residues: Probable aminotransferase TAT1 (449 aa).

Over residues 1-12 (MNHNSNLVLPSH) the composition is skewed to polar residues. The segment at 1 to 20 (MNHNSNLVLPSHQTETQTQD) is disordered.

This sequence belongs to the class-I pyridoxal-phosphate-dependent aminotransferase family. The cofactor is pyridoxal 5'-phosphate.

The polypeptide is Probable aminotransferase TAT1 (Arabidopsis thaliana (Mouse-ear cress)).